The primary structure comprises 376 residues: uncharacterized protein (376 aa).

A signal peptide spans 1-28; sequence MCKPRVWRIAHTIVHVGALLLGTSQLTT. The N-palmitoyl cysteine moiety is linked to residue Cys29. A lipid anchor (S-diacylglycerol cysteine) is attached at Cys29.

The protein belongs to the TP013X lipoprotein family.

The protein resides in the cell membrane. This is an uncharacterized protein from Treponema pallidum (strain Nichols).